A 92-amino-acid polypeptide reads, in one-letter code: SPbeta prophage-derived uncharacterized protein YoqM (92 aa).

Residues 1–25 form the signal peptide; the sequence is MKLRKVLTGSVLSLGLLVSASPAFA.

This is SPbeta prophage-derived uncharacterized protein YoqM (yoqM) from Bacillus subtilis (strain 168).